The following is a 365-amino-acid chain: Validamycin A dioxygenase (365 aa).

The Fe2OG dioxygenase domain occupies 174-284 (HATWTQSVNW…LVSLVYFFDA (111 aa)). Residues His203, Asp205, and His261 each coordinate Fe cation. The interval 331–365 (GELSLSRPGSADSPGSSPADDHPSRPGRHPAQGPQ) is disordered. Residues 336–348 (SRPGSADSPGSSP) show a composition bias toward low complexity.

Belongs to the iron/ascorbate-dependent oxidoreductase family. Fe(2+) is required as a cofactor.

It catalyses the reaction validamycin A + 2-oxoglutarate + O2 = validamycin B + succinate + CO2 + H(+). It carries out the reaction validoxylamine A + 2-oxoglutarate + O2 = validoxylamine B + succinate + CO2 + H(+). It participates in antibiotic biosynthesis. In terms of biological role, involved in the biosynthesis of validamycin B, a component of the antifungal and antibiotic validamycin complex used as a crop protectant. Catalyzes the regioselective hydroxylation of validamycin A (4-O-beta-D-glucopyranosyl-validoxylamine A) at the C-6 position to yield validamycin B. To a lesser extent, also able to convert validoxylamine A to its hydroxylated derivative. In Streptomyces hygroscopicus subsp. limoneus, this protein is Validamycin A dioxygenase.